A 486-amino-acid chain; its full sequence is MLSLKAVLRFASVAVAVVLPTLAQAQAPEPSLSVRSPPVSYNNTLVKQRADPQILKHTNGRYYFIATVPEYDRVVMRQADSIQGLSTAEERLIWARSQSKAGVGYVWAPELHKIGDKWYIYFALGRTAPFDVRPFVLEGTGSDDPMAASWAEKGFITTDFDTFSLDATTFEVNGVRYLSWAQADPRFDNGGGTSLFLARMTNPWTIQRPSIVISRPDQPWERIGHNVNEGSWGMVRNGKVFVTYSAAATDANYCMGLLTADQNADLMNPASWSKSKDPVFVSNTATSQFGPGHSAFTVSDDNQSDVLVYHARQYKDIRGEPLDNPDRMTRVQKLYWRSDGTPDFGIPIPDGPHPVRLRSSADQTLYVGIANNAVQSVKDAPVQNTQFKIVEPGLGGSGTISFESTAQPGKYLSAANGSVSLATLSNTSDAGARSSASFRRVAGLSDATGVSFESAAQAGSYLVSGGNGAAVSVAPSTGAEATFYLE.

The N-terminal stretch at methionine 1–alanine 25 is a signal peptide. Asparagine 42 is a glycosylation site (N-linked (GlcNAc...) asparagine). The segment at leucine 45–proline 342 is catalytic. Aspartate 51 (proton acceptor) is an active-site residue. Glutamate 229 acts as the Proton donor in catalysis. 3 N-linked (GlcNAc...) asparagine glycosylation sites follow: asparagine 302, asparagine 416, and asparagine 426. The tract at residues serine 359 to asparagine 467 is ABD.

This sequence belongs to the glycosyl hydrolase 43 family.

Its subcellular location is the secreted. It catalyses the reaction Hydrolysis of terminal non-reducing alpha-L-arabinofuranoside residues in alpha-L-arabinosides.. The protein operates within glycan metabolism; L-arabinan degradation. Its function is as follows. Secreted arabinofuranosidase that causes degradation of rice cell wall components during infection. Required for virulence. This is Alpha-L-arabinofuranosidase B from Pyricularia oryzae (strain 70-15 / ATCC MYA-4617 / FGSC 8958) (Rice blast fungus).